A 443-amino-acid chain; its full sequence is ATP-dependent protease ATPase subunit HslU (443 aa).

ATP is bound by residues Ile-20, 62–67 (GVGKTE), Asp-255, Glu-321, and Arg-393.

Belongs to the ClpX chaperone family. HslU subfamily. As to quaternary structure, a double ring-shaped homohexamer of HslV is capped on each side by a ring-shaped HslU homohexamer. The assembly of the HslU/HslV complex is dependent on binding of ATP.

Its subcellular location is the cytoplasm. Functionally, ATPase subunit of a proteasome-like degradation complex; this subunit has chaperone activity. The binding of ATP and its subsequent hydrolysis by HslU are essential for unfolding of protein substrates subsequently hydrolyzed by HslV. HslU recognizes the N-terminal part of its protein substrates and unfolds these before they are guided to HslV for hydrolysis. This is ATP-dependent protease ATPase subunit HslU from Helicobacter pylori (strain J99 / ATCC 700824) (Campylobacter pylori J99).